We begin with the raw amino-acid sequence, 111 residues long: Antitoxin PrlF (111 aa).

The 48-residue stretch at 12–59 (TTESKVTIRGQTTIPAPVREALKLKPGQDSIHYEILPGGQVFMCRLGD) folds into the SpoVT-AbrB domain.

As to quaternary structure, homodimer; forms a complex with YhaV with stoichiometry PrlF(2)-YhaV(4), possibly as a YhaV(2)-PrlF(2)-YhaV(2) complex like the MazFE complex. This complex is seen to dimerize in solution.

It is found in the cytoplasm. Its function is as follows. Antitoxin component of a type II toxin-antitoxin (TA) system. Labile antitoxin that binds to the YhaV toxin and neutralizes its ribonuclease activity. Also acts as a transcription factor. The YhaV/PrlF complex binds the prlF-yhaV operon, probably negatively regulating its expression. Functionally, negatively regulates its own expression as well as relieving the export block imposed by high-level synthesis of the LamB-LacZ hybrid protein. Overexpression leads to increased doubling time and also suppresses a htrA (degP) null phenotype. The sequence is that of Antitoxin PrlF (prlF) from Escherichia coli (strain K12).